A 580-amino-acid polypeptide reads, in one-letter code: Multidrug resistance-like ATP-binding protein MdlB (580 aa).

The 286-residue stretch at 25–310 folds into the ABC transmembrane type-1 domain; the sequence is LILAFIFLLS…ITIQQSVLQQ (286 aa). 6 helical membrane-spanning segments follow: residues 26 to 46, 61 to 81, 150 to 170, 173 to 193, 247 to 267, and 268 to 288; these read ILAFIFLLSGSTSEVLGPILI, LLIILTIITLFIILQILSVFL, IILIFIILFAMFTLEWHMALV, FILPLVITIMLVYQYYSTPLL, LDGFLLRPLLSLLSSMILCNF, and MFLFSFFPVGAFEVGVLYAFI. In terms of domain architecture, ABC transporter spans 341–575; the sequence is INIQNVSFYH…KSCYYKMYKF (235 aa). Position 375–382 (375–382) interacts with ATP; sequence GHTGSGKS.

Belongs to the ABC transporter superfamily. Drug exporter-2 (TC 3.A.1.117) family.

The protein resides in the cell membrane. It carries out the reaction ATP + H2O + xenobioticSide 1 = ADP + phosphate + xenobioticSide 2.. This chain is Multidrug resistance-like ATP-binding protein MdlB (mdlB), found in Buchnera aphidicola subsp. Acyrthosiphon pisum (strain APS) (Acyrthosiphon pisum symbiotic bacterium).